A 460-amino-acid chain; its full sequence is Transcriptional regulatory protein UME1 (460 aa).

Residues 14 to 22 carry the NEE-box motif; sequence NEEFKIWKK. WD repeat units lie at residues 233–271, 276–316, 339–379, and 411–451; these read PGIK…KPLW, SLDG…ALGD, FYSE…AIYN, and GENN…VLDG.

Component of the RPD3C(L) complex composed of at least ASH1, CTI6, DEP1, PHO23, RPD3, RXT2, RXT3, SAP30, SDS3, SIN3, UME1 and UME6. Component of the RPD3C(S) complex composed of at least EAF3, RCO1, RPD3, SIN3, and UME1. Interacts with RPD3.

The protein resides in the cytoplasm. It is found in the nucleus. Catalytic component of the RPD3 histone deacetylase complexes RPD3C(L) and RPD3C(S) responsible for the deacetylation of lysine residues on the N-terminal part of the core histones (H2A, H2B, H3 and H4). Histone deacetylation gives a tag for epigenetic repression and plays an important role in transcriptional regulation, cell cycle progression and developmental events. The protein is Transcriptional regulatory protein UME1 (UME1) of Saccharomyces cerevisiae (strain ATCC 204508 / S288c) (Baker's yeast).